A 314-amino-acid polypeptide reads, in one-letter code: Citrate/oxoglutarate carrier protein (314 aa).

3 Solcar repeats span residues 18–100 (VSFS…EAEY), 107–199 (LNNF…VEDG), and 217–301 (EKIG…AKEF). Transmembrane regions (helical) follow at residues 23-44 (ILLG…LEVV), 77-97 (IPWA…VSAE), 111-127 (ASGI…QAYL), 178-198 (VAIR…LVED), and 218-238 (KIGA…IEVI). The DNA-binding element occupies 246 to 259 (KEDPNRPKNLTVGK). The chain crosses the membrane as a helical span at residues 273 to 294 (LYRGVTPRIGLGIWQTVFMVGF).

This sequence belongs to the mitochondrial carrier (TC 2.A.29) family.

The protein localises to the mitochondrion inner membrane. It localises to the mitochondrion matrix. The protein resides in the mitochondrion nucleoid. With respect to regulation, strongly inhibited by mersalyl, p-chloromercuribenzenesulfonate, mercuric chloride, N-ethylmaleimide, pyridoxal 5'-phosphate, bathophenanthroline, and tannic acid. Partially inhibited by alpha-cyanocinnamate and bromescol purple. Weakly inhibited by butylmalonate and phenylsuccinate. Not inhibited by 1,2,3-benzenetricarboxylate or carboxyatractyloside. Mitochondrial antiporter which catalyzes the transport of citrate and oxoglutarate across the membrane. Also shows specificity for oxaloacetate, and to a lesser extent succinate and fumarate. Transports isocitrate, cis-aconitate and L-malate with very low efficiency. Does not show uniporter activity. Helps to maintain normal citrate levels and NADPH/NADP(+) ratios under conditions of oxidative stress. In addition, associates with the mitochondrial nucleoid and binds DNA in vitro, although the relevance of these data in vivo is unclear. This chain is Citrate/oxoglutarate carrier protein (YHM2), found in Saccharomyces cerevisiae (strain ATCC 204508 / S288c) (Baker's yeast).